Here is a 463-residue protein sequence, read N- to C-terminus: Probable Xaa-Pro aminopeptidase PEPP (463 aa).

Residues D259, D270, E393, and E433 each contribute to the Mn(2+) site.

This sequence belongs to the peptidase M24B family. It depends on Mn(2+) as a cofactor.

The catalysed reaction is Release of any N-terminal amino acid, including proline, that is linked to proline, even from a dipeptide or tripeptide.. In terms of biological role, catalyzes the removal of a penultimate prolyl residue from the N-termini of peptides. This chain is Probable Xaa-Pro aminopeptidase PEPP (PEPP), found in Phaeosphaeria nodorum (strain SN15 / ATCC MYA-4574 / FGSC 10173) (Glume blotch fungus).